Reading from the N-terminus, the 119-residue chain is MARVKRGVQAHARHKKVLKAAKGYYSARRKTFRVAKQAVIKAGQYAYRDRKTKKRQFRQLWIIRINAGARIHGLSYSRFINGLKKSGIAVDRKILSELAVYDKSVFATLAEKAKAALSA.

This sequence belongs to the bacterial ribosomal protein bL20 family.

Binds directly to 23S ribosomal RNA and is necessary for the in vitro assembly process of the 50S ribosomal subunit. It is not involved in the protein synthesizing functions of that subunit. The protein is Large ribosomal subunit protein bL20 of Dichelobacter nodosus (strain VCS1703A).